The sequence spans 394 residues: S-adenosylmethionine synthase 1 (394 aa).

Glu-11 contacts Mg(2+). His-17 contributes to the ATP binding site. Glu-45 provides a ligand contact to K(+). Glu-58 and Gln-101 together coordinate L-methionine. ATP is bound by residues 169–171 (DGK), 237–240 (SGRF), Asp-248, 254–255 (RK), Ala-271, Lys-275, and Lys-279. Asp-248 is an L-methionine binding site. Position 279 (Lys-279) interacts with L-methionine.

It belongs to the AdoMet synthase family. Homotetramer. Requires Mn(2+) as cofactor. Mg(2+) serves as cofactor. The cofactor is Co(2+). K(+) is required as a cofactor.

It is found in the cytoplasm. The catalysed reaction is L-methionine + ATP + H2O = S-adenosyl-L-methionine + phosphate + diphosphate. The protein operates within amino-acid biosynthesis; S-adenosyl-L-methionine biosynthesis; S-adenosyl-L-methionine from L-methionine: step 1/1. Its function is as follows. Catalyzes the formation of S-adenosylmethionine from methionine and ATP. The reaction comprises two steps that are both catalyzed by the same enzyme: formation of S-adenosylmethionine (AdoMet) and triphosphate, and subsequent hydrolysis of the triphosphate. The protein is S-adenosylmethionine synthase 1 (SAM1) of Hordeum vulgare (Barley).